We begin with the raw amino-acid sequence, 64 residues long: Disintegrin lebein-1-beta (64 aa).

Residues Asn-1 to Asp-64 form the Disintegrin domain. Disulfide bonds link Cys-6-Cys-29, Cys-20-Cys-26, Cys-25-Cys-50, and Cys-38-Cys-57. A Cell attachment site motif is present at residues Arg-42–Asp-44.

The protein belongs to the disintegrin family. Dimeric disintegrin subfamily. In terms of assembly, heterodimer with subunit alpha; disulfide-linked. As to expression, expressed by the venom gland.

It localises to the secreted. Functionally, strongly inhibits ADP-induced platelet aggregation on human platelet-rich plasma. Also avidly binds to the laminin-binding beta-1 integrins (alpha-3/beta-1, alpha-6/beta-1, and alpha-7/beta-1) in an RGD-independent manner. The sequence is that of Disintegrin lebein-1-beta from Macrovipera lebetinus (Levantine viper).